The chain runs to 365 residues: Chorismate synthase (365 aa).

Residues arginine 48 and arginine 54 each contribute to the NADP(+) site. FMN contacts are provided by residues 131–133 (RSS), 243–244 (NA), glycine 288, 303–307 (KPTSS), and arginine 329.

It belongs to the chorismate synthase family. As to quaternary structure, homotetramer. Requires FMNH2 as cofactor.

It catalyses the reaction 5-O-(1-carboxyvinyl)-3-phosphoshikimate = chorismate + phosphate. The protein operates within metabolic intermediate biosynthesis; chorismate biosynthesis; chorismate from D-erythrose 4-phosphate and phosphoenolpyruvate: step 7/7. Its function is as follows. Catalyzes the anti-1,4-elimination of the C-3 phosphate and the C-6 proR hydrogen from 5-enolpyruvylshikimate-3-phosphate (EPSP) to yield chorismate, which is the branch point compound that serves as the starting substrate for the three terminal pathways of aromatic amino acid biosynthesis. This reaction introduces a second double bond into the aromatic ring system. This chain is Chorismate synthase, found in Rhizobium etli (strain ATCC 51251 / DSM 11541 / JCM 21823 / NBRC 15573 / CFN 42).